The sequence spans 314 residues: Serine protease 46 (314 aa).

One can recognise a Peptidase S1 domain in the interval V44–G281. C69 and C85 are disulfide-bonded. Active-site charge relay system residues include H84 and D130. Intrachain disulfides connect C164–C239, C197–C219, and C229–C257. S233 serves as the catalytic Charge relay system. A helical transmembrane segment spans residues F293–L313.

This sequence belongs to the peptidase S1 family.

It localises to the membrane. The protein is Serine protease 46 (Prss46) of Mus musculus (Mouse).